A 59-amino-acid polypeptide reads, in one-letter code: Large ribosomal subunit protein bL32 (59 aa).

Over residues 1-15 (MAVPKRKTSKSKRDM) the composition is skewed to basic residues. Residues 1–21 (MAVPKRKTSKSKRDMRRASNS) are disordered.

This sequence belongs to the bacterial ribosomal protein bL32 family.

The sequence is that of Large ribosomal subunit protein bL32 from Alkaliphilus metalliredigens (strain QYMF).